Reading from the N-terminus, the 59-residue chain is UPF0434 protein Rsph17029_0141 (59 aa).

This sequence belongs to the UPF0434 family.

In Cereibacter sphaeroides (strain ATCC 17029 / ATH 2.4.9) (Rhodobacter sphaeroides), this protein is UPF0434 protein Rsph17029_0141.